A 126-amino-acid chain; its full sequence is UPF0325 protein PBPRA2971 (126 aa).

This sequence belongs to the UPF0325 family.

This Photobacterium profundum (strain SS9) protein is UPF0325 protein PBPRA2971.